The following is a 258-amino-acid chain: Ribonuclease PH (258 aa).

Phosphate-binding positions include Arg-88 and 126–128; that span reads GTR.

This sequence belongs to the RNase PH family. In terms of assembly, homohexameric ring arranged as a trimer of dimers.

It catalyses the reaction tRNA(n+1) + phosphate = tRNA(n) + a ribonucleoside 5'-diphosphate. In terms of biological role, phosphorolytic 3'-5' exoribonuclease that plays an important role in tRNA 3'-end maturation. Removes nucleotide residues following the 3'-CCA terminus of tRNAs; can also add nucleotides to the ends of RNA molecules by using nucleoside diphosphates as substrates, but this may not be physiologically important. Probably plays a role in initiation of 16S rRNA degradation (leading to ribosome degradation) during starvation. The sequence is that of Ribonuclease PH from Mycobacteroides abscessus (strain ATCC 19977 / DSM 44196 / CCUG 20993 / CIP 104536 / JCM 13569 / NCTC 13031 / TMC 1543 / L948) (Mycobacterium abscessus).